Here is a 304-residue protein sequence, read N- to C-terminus: uncharacterized protein (304 aa).

Helical transmembrane passes span 9-29, 67-87, 100-120, 131-151, 159-179, 189-209, 222-242, 252-272, and 278-298; these read VFYV…SIHF, IILY…GNMF, AGSI…GIFF, EFYI…INSS, FFLG…QNLI, AVVI…CLAF, IGML…GMLM, ITVF…IGYL, and INIY…LALK. EamA domains follow at residues 13-148 and 171-298; these read LLMG…IFVI and FIQS…LALK.

This sequence belongs to the EamA transporter family.

It localises to the cell membrane. This is an uncharacterized protein from Haemophilus influenzae (strain ATCC 51907 / DSM 11121 / KW20 / Rd).